The chain runs to 250 residues: Undecaprenyl-diphosphatase (250 aa).

7 helical membrane passes run 35 to 55 (DLSV…IFVG), 73 to 93 (INLT…GVLL), 100 to 120 (SLSN…ALLI), 146 to 166 (ALAI…SLLI), 171 to 191 (EIAL…AGLL), 200 to 220 (SYSI…LFIL), and 229 to 249 (LKIF…LGGI).

This sequence belongs to the UppP family.

The protein resides in the cell inner membrane. It catalyses the reaction di-trans,octa-cis-undecaprenyl diphosphate + H2O = di-trans,octa-cis-undecaprenyl phosphate + phosphate + H(+). Its function is as follows. Catalyzes the dephosphorylation of undecaprenyl diphosphate (UPP). Confers resistance to bacitracin. This Thermosipho melanesiensis (strain DSM 12029 / CIP 104789 / BI429) protein is Undecaprenyl-diphosphatase.